Reading from the N-terminus, the 160-residue chain is Secreted RxLR effector protein 83 (160 aa).

Residues M1–A21 form the signal peptide. The RxLR signature appears at R27–R30. 2 N-linked (GlcNAc...) asparagine glycosylation sites follow: N39 and N131.

The protein belongs to the RxLR effector family.

It localises to the secreted. It is found in the host nucleus. The protein localises to the host cytoplasm. Secreted effector that completely suppresses the host cell death induced by cell death-inducing proteins. In Plasmopara viticola (Downy mildew of grapevine), this protein is Secreted RxLR effector protein 83.